We begin with the raw amino-acid sequence, 213 residues long: C-type lectin domain family 4 member C (213 aa).

At 1-21 (MVPEEEPQDREKGLWWFQLKV) the chain is on the cytoplasmic side. The chain crosses the membrane as a helical; Signal-anchor for type II membrane protein span at residues 22-44 (WSMAVVSILLLSVCFTVSSVVPH). Over 45–213 (NFMYSKTVKR…SICKMKKIYI (169 aa)) the chain is Extracellular. 2 disulfide bridges follow: C70–C82 and C83–C94. The C-type lectin domain occupies 90 to 207 (FQSSCYFIST…CHVPQKSICK (118 aa)). N-linked (GlcNAc...) asparagine glycans are attached at residues N110 and N137. Intrachain disulfides connect C111/C206 and C180/C198. A carbohydrate is bound at residue S139. N164 carries N-linked (GlcNAc...) asparagine glycosylation. Residues E172, N174, and E178 each coordinate Ca(2+). Residues E178, 184–186 (NFR), N194, 194–195 (ND), and Q202 each bind a carbohydrate. Ca(2+) is bound by residues N194 and D195.

Homodimer. Expressed in plasmacytoid dendritic cells (PDCs). Constitutively expressed in immature monocyte-derived dendritic cells (iMDDC) and is significantly down-regulated upon maturation with LPS but not with TNF-alpha.

The protein resides in the cell membrane. Lectin-type cell surface receptor which may play a role in antigen capturing by dendritic cells. Specifically recognizes non-sialylated galactose-terminated biantennary glycans containing the trisaccharide epitope Gal(beta1-3/4)GlcNAc(beta1-2)Man. Binds to serum IgG. Efficiently targets ligand into antigen-processing and peptide-loading compartments for presentation to T-cells. May mediate potent inhibition of induction of IFN-alpha/beta expression in plasmacytoid dendritic cells. May act as a signaling receptor that activates protein-tyrosine kinases and mobilizes intracellular calcium. In Homo sapiens (Human), this protein is C-type lectin domain family 4 member C (CLEC4C).